The sequence spans 134 residues: T-cell receptor alpha chain V region RL-5 (134 aa).

Positions 1-20 are cleaved as a signal peptide; it reads MFSASCSVTVVVLLITVRRT. The interval 21 to 114 is v segment; the sequence is NGASVTQTEG…DSAVYYCALR (94 aa). The j segment stretch occupies residues 115–134; it reads RGASNKLTLGTGTLLKVELN. The N-linked (GlcNAc...) asparagine glycan is linked to Asn-134.

Rearrangement with the C region would elongate the sequence with Ile-Thr-; which creates a potential N-glycosylation site at Asn-134.

This Oryctolagus cuniculus (Rabbit) protein is T-cell receptor alpha chain V region RL-5.